A 343-amino-acid polypeptide reads, in one-letter code: Heat-inducible transcription repressor HrcA (343 aa).

Belongs to the HrcA family.

Functionally, negative regulator of class I heat shock genes (grpE-dnaK-dnaJ and groELS operons). Prevents heat-shock induction of these operons. This is Heat-inducible transcription repressor HrcA from Lysinibacillus sphaericus (Bacillus sphaericus).